Reading from the N-terminus, the 519-residue chain is MDRLHHPQLQTLVQTTSFHAQHEPTTPAVLCEGRTLTYEQLHRESNRIAHALKAAGLAPGDRVAYLGKESEHYYEILFGCAKSGTVLVPVNWRLTAPEVSHILQDSGTRLLFLEDEFGPVVEKMPAAPPETIVALGESFAAWKASHLDTDPKPHDVTPDTPVAQLYTSGTTGLPKGVVLAHRSFFAIRDALASEGLDWIDWRVGDIALIGIPGFHIGGLWWATQNFNAGTTVVAMRAFAARQAVDLIRDLGITTACVVPAMLRMMLTEPGVGAKDFTTLRKTVYGGSPISEALLEESLAVLDCEFAQIYGLTETGNTAVCLPPAAHVPGGSLMQAAGHPYPGVRSKVIDGEGRELPPGAVGEVCLATPARMVEYWGLPDKTAETLVDGWIHTGDAGYVDEDGYVFIRDRIKDAILVAGENVYPAEIENVLEGHPGVAEAVVVGAPDERWGEYVHAFVVAAPGQQPSPRDLHTFLVPQLASFKLPARYEFIDSVPRNPSGKILRRELRDRFWGDSARKVN.

Threonine 167 lines the Mg(2+) pocket. ATP-binding residues include isoleucine 216 and threonine 312. Residue glutamate 313 participates in Mg(2+) binding. Residues aspartate 394 and lysine 411 each coordinate ATP.

Belongs to the ATP-dependent AMP-binding enzyme family. It depends on Mg(2+) as a cofactor.

It carries out the reaction a medium-chain fatty acid + holo-[ACP] + ATP = a medium-chain fatty acyl-[ACP] + AMP + diphosphate. It catalyses the reaction a medium-chain fatty acid + ATP + H(+) = a medium-chain fatty acyl-AMP + diphosphate. The enzyme catalyses a medium-chain fatty acyl-AMP + holo-[ACP] = a medium-chain fatty acyl-[ACP] + AMP + H(+). The catalysed reaction is octanoate + holo-[ACP] + ATP = octanoyl-[ACP] + AMP + diphosphate. It carries out the reaction octanoate + ATP + H(+) = octanoyl-AMP + diphosphate. It catalyses the reaction octanoyl-AMP + holo-[ACP] = octanoyl-[ACP] + AMP + H(+). The enzyme catalyses a (2E)-enoyl fatty acid + holo-[ACP] + ATP = a (2E)-enoyl-[ACP] + AMP + diphosphate. The catalysed reaction is a (2E)-enoyl fatty acid + ATP + H(+) = a (2E)-2-fatty-enoyl-AMP + diphosphate. It carries out the reaction a (2E)-2-fatty-enoyl-AMP + holo-[ACP] = a (2E)-enoyl-[ACP] + AMP + H(+). It catalyses the reaction (2E)-2-butenoate + holo-[ACP] + ATP = (2E)-butenoyl-[ACP] + AMP + diphosphate. The enzyme catalyses (2E)-2-butenoate + ATP + H(+) = (2E)-but-2-enoyl-AMP + diphosphate. The catalysed reaction is (2E)-but-2-enoyl-AMP + holo-[ACP] = (2E)-butenoyl-[ACP] + AMP + H(+). It carries out the reaction a (3R)-3-isocyanyl-fatty acid + holo-[ACP] + ATP = a (3R)-3-isocyanyl-fatty acyl-[ACP] + AMP + diphosphate. It catalyses the reaction a (3R)-3-isocyanyl-fatty acid + ATP + H(+) = a (3R)-3-isocyanyl-fatty acyl-AMP + diphosphate. The enzyme catalyses a (3R)-3-isocyanyl-fatty acyl-AMP + holo-[ACP] = a (3R)-3-isocyanyl-fatty acyl-[ACP] + AMP + H(+). The catalysed reaction is (3R)-3-isocyanylbutanoate + holo-[ACP] + ATP = (3R)-3-isocyanylbutanoyl-[ACP] + AMP + diphosphate. It carries out the reaction (3R)-3-isocyanylbutanoate + ATP + H(+) = (3R)-3-isocyanylbutanoyl-AMP + diphosphate. It catalyses the reaction (3R)-3-isocyanylbutanoyl-AMP + holo-[ACP] = (3R)-3-isocyanylbutanoyl-[ACP] + AMP + H(+). Acyl:acyl-carrier protein ligase involved in the biosynthesis of a unique class of isonitrile lipopeptides (INLPs). Shows a strong preference for fatty acids with a short/medium-chain length (C4-C8) in vitro, and accepts alpha,beta-unsaturated fatty acids such as crotonate, which seems to be a physiological substrate. Acts twice during the INLP pathway, catalyzing the activation of crotonate ((2E)-2-butenoate) as well as (3R)-3-isocyanylbutanoate as acyl-adenylates (acyl-AMP), and then the acyl transfer to the dedicated acyl-carrier protein ScoB. This Streptomyces coeruleorubidus protein is Fatty acid--[acyl-carrier-protein] ligase ScoC.